Here is a 532-residue protein sequence, read N- to C-terminus: Light-independent protochlorophyllide reductase subunit B (532 aa).

Asp-36 contacts [4Fe-4S] cluster. The active-site Proton donor is the Asp-318. Residue 453–454 (GM) participates in substrate binding.

Belongs to the ChlB/BchB/BchZ family. As to quaternary structure, protochlorophyllide reductase is composed of three subunits; ChlL, ChlN and ChlB. Forms a heterotetramer of two ChlB and two ChlN subunits. The cofactor is [4Fe-4S] cluster.

The protein localises to the plastid. The protein resides in the chloroplast. The catalysed reaction is chlorophyllide a + oxidized 2[4Fe-4S]-[ferredoxin] + 2 ADP + 2 phosphate = protochlorophyllide a + reduced 2[4Fe-4S]-[ferredoxin] + 2 ATP + 2 H2O. It participates in porphyrin-containing compound metabolism; chlorophyll biosynthesis (light-independent). Functionally, component of the dark-operative protochlorophyllide reductase (DPOR) that uses Mg-ATP and reduced ferredoxin to reduce ring D of protochlorophyllide (Pchlide) to form chlorophyllide a (Chlide). This reaction is light-independent. The NB-protein (ChlN-ChlB) is the catalytic component of the complex. The protein is Light-independent protochlorophyllide reductase subunit B of Tetradesmus obliquus (Green alga).